The following is a 246-amino-acid chain: 2,5-diamino-6-ribosylamino-4(3H)-pyrimidinone 5'-phosphate reductase (246 aa).

Residues Thr78, Asp82, Leu163, and 186-190 contribute to the NADP(+) site; that span reads GAEVL.

It belongs to the HTP reductase family. In terms of assembly, homodimer.

The catalysed reaction is 2,5-diamino-6-(1-D-ribitylamino)pyrimidin-4(3H)-one 5'-phosphate + NADP(+) = 2,5-diamino-6-(1-D-ribosylamino)pyrimidin-4(3H)-one 5'-phosphate + NADPH + H(+). The enzyme catalyses 2,5-diamino-6-(1-D-ribitylamino)pyrimidin-4(3H)-one 5'-phosphate + NAD(+) = 2,5-diamino-6-(1-D-ribosylamino)pyrimidin-4(3H)-one 5'-phosphate + NADH + H(+). It participates in cofactor biosynthesis; riboflavin biosynthesis. Functionally, catalyzes an early step in riboflavin biosynthesis, the NADPH-dependent reduction of the ribose side chain of 2,5-diamino-6-ribosylamino-4(3H)-pyrimidinone 5'-phosphate, yielding 2,5-diamino-6-ribitylamino-4(3H)-pyrimidinone 5'-phosphate. The polypeptide is 2,5-diamino-6-ribosylamino-4(3H)-pyrimidinone 5'-phosphate reductase (RIB7) (Eremothecium gossypii (strain ATCC 10895 / CBS 109.51 / FGSC 9923 / NRRL Y-1056) (Yeast)).